Reading from the N-terminus, the 560-residue chain is Chaperonin GroEL 2 (560 aa).

Residues 29–32 (TLGP), Lys50, 86–90 (DGTTT), Gly414, and Asp494 contribute to the ATP site. Residues 524–546 (EDEDDDDGGGGGGGGMPAGGAGG) are disordered. Positions 532-546 (GGGGGGGMPAGGAGG) are enriched in gly residues.

It belongs to the chaperonin (HSP60) family. As to quaternary structure, forms a cylinder of 14 subunits composed of two heptameric rings stacked back-to-back. Interacts with the co-chaperonin GroES.

The protein localises to the cytoplasm. It carries out the reaction ATP + H2O + a folded polypeptide = ADP + phosphate + an unfolded polypeptide.. Its function is as follows. Together with its co-chaperonin GroES, plays an essential role in assisting protein folding. The GroEL-GroES system forms a nano-cage that allows encapsulation of the non-native substrate proteins and provides a physical environment optimized to promote and accelerate protein folding. In Salinibacter ruber (strain DSM 13855 / M31), this protein is Chaperonin GroEL 2.